A 250-amino-acid chain; its full sequence is 2,3-bisphosphoglycerate-dependent phosphoglycerate mutase (250 aa).

Substrate contacts are provided by residues 8–15 (RHGQSAWN), 21–22 (TG), arginine 60, 87–90 (ERHY), lysine 98, 114–115 (RR), and 183–184 (GN). Histidine 9 serves as the catalytic Tele-phosphohistidine intermediate. Glutamate 87 serves as the catalytic Proton donor/acceptor.

Belongs to the phosphoglycerate mutase family. BPG-dependent PGAM subfamily. Homodimer.

The catalysed reaction is (2R)-2-phosphoglycerate = (2R)-3-phosphoglycerate. It functions in the pathway carbohydrate degradation; glycolysis; pyruvate from D-glyceraldehyde 3-phosphate: step 3/5. In terms of biological role, catalyzes the interconversion of 2-phosphoglycerate and 3-phosphoglycerate. The protein is 2,3-bisphosphoglycerate-dependent phosphoglycerate mutase of Nitratidesulfovibrio vulgaris (strain ATCC 29579 / DSM 644 / CCUG 34227 / NCIMB 8303 / VKM B-1760 / Hildenborough) (Desulfovibrio vulgaris).